Here is a 145-residue protein sequence, read N- to C-terminus: Large-conductance mechanosensitive channel (145 aa).

A run of 2 helical transmembrane segments spans residues 16 to 36 (VVDL…VTSF) and 83 to 103 (GVFI…FMVI).

This sequence belongs to the MscL family. As to quaternary structure, homopentamer.

The protein localises to the cell inner membrane. Functionally, channel that opens in response to stretch forces in the membrane lipid bilayer. May participate in the regulation of osmotic pressure changes within the cell. The polypeptide is Large-conductance mechanosensitive channel (Geobacter metallireducens (strain ATCC 53774 / DSM 7210 / GS-15)).